Here is a 217-residue protein sequence, read N- to C-terminus: Adenylate kinase (217 aa).

10 to 15 (GAGKGT) lines the ATP pocket. An NMP region spans residues 30–59 (STGDMFREAIKRGTPLGRQAEVYIKGGRLV). AMP contacts are provided by residues Thr-31, Arg-36, 57–59 (RLV), 85–88 (GFPR), and Gln-92. Positions 126–163 (GRRVCRQCGATYHVRYNPPAVPGKCDACGQDLVQRADD) are LID. Arg-127 contributes to the ATP binding site. Zn(2+) is bound by residues Cys-130 and Cys-133. An ATP-binding site is contributed by 136 to 137 (TY). Zn(2+)-binding residues include Cys-150 and Cys-153. Positions 160 and 171 each coordinate AMP. Gln-199 is a binding site for ATP.

It belongs to the adenylate kinase family. Monomer.

The protein localises to the cytoplasm. The enzyme catalyses AMP + ATP = 2 ADP. The protein operates within purine metabolism; AMP biosynthesis via salvage pathway; AMP from ADP: step 1/1. Catalyzes the reversible transfer of the terminal phosphate group between ATP and AMP. Plays an important role in cellular energy homeostasis and in adenine nucleotide metabolism. The sequence is that of Adenylate kinase from Moorella thermoacetica (strain ATCC 39073 / JCM 9320).